The following is a 260-amino-acid chain: MKLGESMKKNATLSVKIIAFLGVLIFTVMPVANAMHIMEGYLSPKWCIIWGILVLPFLIKGSLNVKKVVSDDQRIKLLFAMAGAFIFILSALKLPSFTGTSSHPTGIGLSTILFGPAITTVLGVIVLLFQALLLAHGGISTLGANSFAMAVMGPLMAYGVYKILQKIKIPQNINIFFSATVGDLFTYCITAIQLGIDHPLEYDGIFASIERYLGVFAITQIPIAIAEGILTVLIFNVIAKYSSKELGKLGILNNSEEAEL.

The first 34 residues, 1–34 (MKLGESMKKNATLSVKIIAFLGVLIFTVMPVANA), serve as a signal peptide directing secretion. The next 6 helical transmembrane spans lie at 39–59 (EGYLSPKWCIIWGILVLPFLI), 77–97 (LLFAMAGAFIFILSALKLPSF), 109–129 (LSTILFGPAITTVLGVIVLLF), 132–152 (LLLAHGGISTLGANSFAMAVM), 175–195 (IFFSATVGDLFTYCITAIQLG), and 215–235 (VFAITQIPIAIAEGILTVLIF).

Belongs to the CbiM family. In terms of assembly, forms an energy-coupling factor (ECF) transporter complex composed of an ATP-binding protein (A component, CbiO), a transmembrane protein (T component, CbiQ) and 2 possible substrate-capture proteins (S components, CbiM and CbiN) of unknown stoichimetry.

Its subcellular location is the cell membrane. It participates in cofactor biosynthesis; adenosylcobalamin biosynthesis. Part of the energy-coupling factor (ECF) transporter complex CbiMNOQ involved in cobalt import. The sequence is that of Cobalt transport protein CbiM from Clostridium cellulovorans (strain ATCC 35296 / DSM 3052 / OCM 3 / 743B).